Reading from the N-terminus, the 159-residue chain is Cyclic pyranopterin monophosphate synthase (159 aa).

Residues leucine 75 to histidine 77 and methionine 113 to glutamate 114 contribute to the substrate site. The active site involves aspartate 128.

The protein belongs to the MoaC family. As to quaternary structure, homohexamer; trimer of dimers.

The enzyme catalyses (8S)-3',8-cyclo-7,8-dihydroguanosine 5'-triphosphate = cyclic pyranopterin phosphate + diphosphate. It functions in the pathway cofactor biosynthesis; molybdopterin biosynthesis. In terms of biological role, catalyzes the conversion of (8S)-3',8-cyclo-7,8-dihydroguanosine 5'-triphosphate to cyclic pyranopterin monophosphate (cPMP). The chain is Cyclic pyranopterin monophosphate synthase from Vibrio vulnificus (strain YJ016).